The chain runs to 140 residues: Large ribosomal subunit protein uL11 (140 aa).

The protein belongs to the universal ribosomal protein uL11 family. Part of the ribosomal stalk of the 50S ribosomal subunit. Interacts with L10 and the large rRNA to form the base of the stalk. L10 forms an elongated spine to which L12 dimers bind in a sequential fashion forming a multimeric L10(L12)X complex. In terms of processing, one or more lysine residues are methylated.

In terms of biological role, forms part of the ribosomal stalk which helps the ribosome interact with GTP-bound translation factors. The chain is Large ribosomal subunit protein uL11 from Staphylococcus saprophyticus subsp. saprophyticus (strain ATCC 15305 / DSM 20229 / NCIMB 8711 / NCTC 7292 / S-41).